A 125-amino-acid chain; its full sequence is DNA-directed RNA polymerase II subunit RPB9 (125 aa).

Met1 carries the post-translational modification N-acetylmethionine. Positions 17, 20, 39, 42, 86, 89, 114, and 119 each coordinate Zn(2+). The segment at 17 to 42 adopts a C4-type zinc-finger fold; it reads CQECNNMLYPKEDKENRILLYACRNC. Residues 82–124 form a TFIIS-type zinc finger; that stretch reads EDHPCQKCGHKEAVFFQSHSARAEDAMRLYYVCTAPHCGHRWT.

The protein belongs to the archaeal RpoM/eukaryotic RPA12/RPB9/RPC11 RNA polymerase family. In terms of assembly, component of the RNA polymerase II (Pol II) core complex consisting of 12 subunits: a ten-subunit catalytic core composed of POLR2A/RPB1, POLR2B/RPB2, POLR2C/RPB3, POLR2I/RPB9, POLR2J/RPB11, POLR2E/RPABC1, POLR2F/RPABC2, POLR2H/RPABC3, POLR2K/RPABC4 and POLR2L/RPABC5 and a mobile stalk composed of two subunits POLR2D/RPB4 and POLR2G/RPB7, protruding from the core and functioning primarily in transcription initiation. Part of Pol II(G) complex, in which Pol II core associates with an additional subunit POLR2M; unlike conventional Pol II, Pol II(G) functions as a transcriptional repressor. Part of TBP-based Pol II pre-initiation complex (PIC), in which Pol II core assembles with general transcription factors and other specific initiation factors including GTF2E1, GTF2E2, GTF2F1, GTF2F2, TCEA1, ERCC2, ERCC3, GTF2H2, GTF2H3, GTF2H4, GTF2H5, GTF2A1, GTF2A2, GTF2B and TBP; this large multi-subunit PIC complex mediates DNA unwinding and targets Pol II core to the transcription start site where the first phosphodiester bond forms.

The protein localises to the nucleus. It localises to the nucleolus. Functionally, DNA-dependent RNA polymerase catalyzes the transcription of DNA into RNA using the four ribonucleoside triphosphates as substrates. Component of RNA polymerase II which synthesizes mRNA precursors and many functional non-coding RNAs. Pol II is the central component of the basal RNA polymerase II transcription machinery. It is composed of mobile elements that move relative to each other. POLR2I/RPB9 is part of the upper jaw surrounding the central large cleft and thought to grab the incoming DNA template. The sequence is that of DNA-directed RNA polymerase II subunit RPB9 (POLR2I) from Bos taurus (Bovine).